Here is a 339-residue protein sequence, read N- to C-terminus: GTPase Obg (339 aa).

The Obg domain maps to 1-159 (MKFVDEAFVR…RELKLELKLL (159 aa)). The OBG-type G domain occupies 160-333 (ADVGLLGLPN…LCYDLMSFLE (174 aa)). GTP contacts are provided by residues 166–173 (GLPNAGKS), 191–195 (FTTLY), 213–216 (DIPG), 283–286 (NKID), and 314–316 (SAI). Mg(2+) is bound by residues S173 and T193.

This sequence belongs to the TRAFAC class OBG-HflX-like GTPase superfamily. OBG GTPase family. As to quaternary structure, monomer. It depends on Mg(2+) as a cofactor.

Its subcellular location is the cytoplasm. Functionally, an essential GTPase which binds GTP, GDP and possibly (p)ppGpp with moderate affinity, with high nucleotide exchange rates and a fairly low GTP hydrolysis rate. Plays a role in control of the cell cycle, stress response, ribosome biogenesis and in those bacteria that undergo differentiation, in morphogenesis control. In Coxiella burnetii (strain RSA 331 / Henzerling II), this protein is GTPase Obg.